A 416-amino-acid polypeptide reads, in one-letter code: MESYKVMLNGPAPWGFRLQGGKDFSMPLSISRLTPGGKAAQAGVGVGDWVLYIDGESTGTMTHIEAQNRIRACGDRLCLTLSRAQNHLGKPQKDSLPCSEPPKYNFAPSTALNKTARPFGASSPPNPRPGLVTKPVTYVPLAPACTPQHNGQVSVPDPSPGAAMKTEPGLAPRTPAATPGPTSRPPWAVDPSFAERYAPDKTSTVLSKHSQPATPTPMQNRSSIVQAAQQAPESPGRTPLCYKCNKIIRGRYLVALGHYYHPEEFTCCQCRKVLDEGGFFEEKGSIFCPKCYDTRYAPSCAKCKKKITGEVMHALKMTWHVQCFTCAACKTPIRNRAFYMEEGQPYCERDYEKMFGTKCRGCDFKIDAGDRFLEALGFSWHDTCFVCAICQTNLEGKTFYSKKDKPLCKSHAFSHV.

One can recognise a PDZ domain in the interval 1 to 85; the sequence is MESYKVMLNG…RLCLTLSRAQ (85 aa). Disordered regions lie at residues 145 to 191 and 202 to 221; these read CTPQ…AVDP and TSTV…MQNR. Low complexity predominate over residues 168–181; it reads PGLAPRTPAATPGP. LIM zinc-binding domains lie at 239–297, 298–357, and 358–416; these read PLCY…TRYA, PSCA…MFGT, and KCRG…FSHV.

As to quaternary structure, interacts with various PKC isoforms through the LIM zinc-binding domains. Interacts with TPM2. Interacts with TBX4 and TBX5.

The protein localises to the cytoplasm. Its subcellular location is the cytoskeleton. The protein resides in the myofibril. It localises to the sarcomere. It is found in the z line. Its function is as follows. May function as a scaffold on which the coordinated assembly of proteins can occur. May play a role as an adapter that, via its PDZ domain, localizes LIM-binding proteins to actin filaments of both skeletal muscle and nonmuscle tissues. May be involved in bone formation. The polypeptide is PDZ and LIM domain protein 7 (PDLIM7) (Gallus gallus (Chicken)).